Reading from the N-terminus, the 178-residue chain is MLEGVIRESITKANAKALKKDGYLIANVYGKGVENVSCAFKLNPFIKYLKEKKHLIFPVKLGDKTFEVVVQEYQKNPVTNELIHVDLLAVTKGVKSKFKVPVKYQGTPVGLKNKGILMLSKKRISVECAPEHLPNHYLVDVAPLDVNESILVRDLEKHENVKILDHDSIAVIGVIKAK.

The protein belongs to the bacterial ribosomal protein bL25 family. CTC subfamily. In terms of assembly, part of the 50S ribosomal subunit; part of the 5S rRNA/L5/L18/L25 subcomplex. Contacts the 5S rRNA. Binds to the 5S rRNA independently of L5 and L18.

This is one of the proteins that binds to the 5S RNA in the ribosome where it forms part of the central protuberance. The polypeptide is Large ribosomal subunit protein bL25 (Helicobacter acinonychis (strain Sheeba)).